We begin with the raw amino-acid sequence, 201 residues long: Phospholipase A2 inhibitor PIP (201 aa).

The first 19 residues, 1–19, serve as a signal peptide directing secretion; that stretch reads MKSLQTICLLFIFIARGTS. Cystine bridges form between Cys-22/Cys-46, Cys-25/Cys-32, Cys-39/Cys-67, Cys-73/Cys-94, Cys-95/Cys-100, Cys-118/Cys-143, Cys-136/Cys-165, and Cys-169/Cys-191. N-linked (GlcNAc...) asparagine glycosylation occurs at Asn-157.

As to quaternary structure, homohexamer. In terms of processing, glycosylated. As to expression, expressed by the liver.

The protein localises to the secreted. Functionally, inhibits the enzymatic activity of phospholipase A2 (PA2). Binds to the major PLA2 toxin of D.russelli siamensis (Daboiatoxin, AC Q7T2R1, and AC Q7T3T5) at 1-2-fold molar excess of inhibitor to toxin. It exhibits broad spectra in neutralizing the toxicity of various snake venoms and toxins and inhibits the formation of edema in mice. May bind to PLA2 through its proline-rich hydrophobic core region. This Malayopython reticulatus (Reticulate python) protein is Phospholipase A2 inhibitor PIP.